A 376-amino-acid chain; its full sequence is NIF3-like protein 1 (376 aa).

N6-acetyllysine is present on K108. The tract at residues 243–376 (LLLHTGMGRL…ETDRDPLRVV (134 aa)) is mediates interaction with COPS2. Phosphothreonine is present on T254. Residue S258 is modified to Phosphoserine.

It belongs to the GTP cyclohydrolase I type 2/NIF3 family. As to quaternary structure, homodimer. Interacts with COPS2. Interacts with THOC7.

It localises to the cytoplasm. The protein localises to the nucleus. May function as a transcriptional corepressor through its interaction with COPS2, negatively regulating the expression of genes involved in neuronal differentiation. This is NIF3-like protein 1 from Rattus norvegicus (Rat).